Consider the following 157-residue polypeptide: 2-C-methyl-D-erythritol 2,4-cyclodiphosphate synthase (157 aa).

A divalent metal cation-binding residues include Asp8 and His10. 4-CDP-2-C-methyl-D-erythritol 2-phosphate contacts are provided by residues 8 to 10 and 34 to 35; these read DVH and HS. An a divalent metal cation-binding site is contributed by His42. Residues 56 to 58, 61 to 65, 100 to 106, 132 to 135, Phe139, and Arg142 contribute to the 4-CDP-2-C-methyl-D-erythritol 2-phosphate site; these read DIG, FPDTD, AQAPKMA, and TTTE.

It belongs to the IspF family. In terms of assembly, homotrimer. A divalent metal cation serves as cofactor.

The enzyme catalyses 4-CDP-2-C-methyl-D-erythritol 2-phosphate = 2-C-methyl-D-erythritol 2,4-cyclic diphosphate + CMP. The protein operates within isoprenoid biosynthesis; isopentenyl diphosphate biosynthesis via DXP pathway; isopentenyl diphosphate from 1-deoxy-D-xylulose 5-phosphate: step 4/6. In terms of biological role, involved in the biosynthesis of isopentenyl diphosphate (IPP) and dimethylallyl diphosphate (DMAPP), two major building blocks of isoprenoid compounds. Catalyzes the conversion of 4-diphosphocytidyl-2-C-methyl-D-erythritol 2-phosphate (CDP-ME2P) to 2-C-methyl-D-erythritol 2,4-cyclodiphosphate (ME-CPP) with a corresponding release of cytidine 5-monophosphate (CMP). The polypeptide is 2-C-methyl-D-erythritol 2,4-cyclodiphosphate synthase (Pseudomonas syringae pv. tomato (strain ATCC BAA-871 / DC3000)).